Consider the following 57-residue polypeptide: Large ribosomal subunit protein bL32 (57 aa).

A disordered region spans residues 1–21; sequence MAVQQRRSSKHRRDKRRSHDA. The span at 7 to 18 shows a compositional bias: basic residues; sequence RSSKHRRDKRRS.

It belongs to the bacterial ribosomal protein bL32 family.

This Mycoplasma pneumoniae (strain ATCC 29342 / M129 / Subtype 1) (Mycoplasmoides pneumoniae) protein is Large ribosomal subunit protein bL32 (rpmF).